We begin with the raw amino-acid sequence, 181 residues long: Ribosome-recycling factor (181 aa).

A disordered region spans residues 135–160 (MDDIKKDKDMPEDDARKAEDQTQKLT).

Belongs to the RRF family.

It localises to the cytoplasm. Its function is as follows. Responsible for the release of ribosomes from messenger RNA at the termination of protein biosynthesis. May increase the efficiency of translation by recycling ribosomes from one round of translation to another. This Leuconostoc mesenteroides subsp. mesenteroides (strain ATCC 8293 / DSM 20343 / BCRC 11652 / CCM 1803 / JCM 6124 / NCDO 523 / NBRC 100496 / NCIMB 8023 / NCTC 12954 / NRRL B-1118 / 37Y) protein is Ribosome-recycling factor.